Reading from the N-terminus, the 265-residue chain is HTH-type transcriptional activator CfaD (265 aa).

One can recognise an HTH araC/xylS-type domain in the interval 164–261; that stretch reads DKVRNVIEKD…GVTPKQFFTY (98 aa). DNA-binding regions (H-T-H motif) lie at residues 181 to 202 and 228 to 251; these read GIIADAFNVSEITIRKRLESEN and ISQISNMIGISSASYFIRVFNKHY.

Homodimer.

Transcriptional activator of the CFA/I adhesin (cfaA and cfaB) genes of enterotoxigenic E.coli at 37 degrees Celsius. Also represses the silencing effect of H-NS (hns). In Escherichia coli, this protein is HTH-type transcriptional activator CfaD.